The primary structure comprises 212 residues: MTRGTLNFVTSPMNAGKTANMLLRARHAATLGRRVLLAKPLSDTRHESSVIRSRCGIEMKCDLCAGPEFSFTKDVLYGDVDILLVDEAQFLSSRQIDELREVADVHGIPVWCYGLLTDFKKNLFEGSKRLVELCDKMIELDIVCYFCKADGRFHLKYANGKAVVEGPSIDISIPGDGKFVAVCHMCWTEKTSTSEEVQDPRVLCAKVIPVDR.

ATP is bound by residues 11-18 (SPMNAGKT), 43-45 (DTR), and 86-89 (DEAQ). Catalysis depends on Glu87, which acts as the Proton acceptor. Residue Phe119 coordinates substrate. Positions 144, 147, 183, and 186 each coordinate Zn(2+).

Belongs to the thymidine kinase family.

It carries out the reaction thymidine + ATP = dTMP + ADP + H(+). The chain is Thymidine kinase (TK) from Encephalitozoon cuniculi (strain GB-M1) (Microsporidian parasite).